A 354-amino-acid polypeptide reads, in one-letter code: Anthranilate phosphoribosyltransferase (354 aa).

Belongs to the anthranilate phosphoribosyltransferase family.

It catalyses the reaction N-(5-phospho-beta-D-ribosyl)anthranilate + diphosphate = 5-phospho-alpha-D-ribose 1-diphosphate + anthranilate. It participates in amino-acid biosynthesis; L-tryptophan biosynthesis; L-tryptophan from chorismate: step 2/5. This chain is Anthranilate phosphoribosyltransferase (trp4), found in Schizosaccharomyces pombe (strain 972 / ATCC 24843) (Fission yeast).